The sequence spans 390 residues: NADH-quinone oxidoreductase subunit D (390 aa).

Belongs to the complex I 49 kDa subunit family. As to quaternary structure, NDH-1 is composed of 14 different subunits. Subunits NuoB, C, D, E, F, and G constitute the peripheral sector of the complex.

The protein localises to the cell inner membrane. The catalysed reaction is a quinone + NADH + 5 H(+)(in) = a quinol + NAD(+) + 4 H(+)(out). Functionally, NDH-1 shuttles electrons from NADH, via FMN and iron-sulfur (Fe-S) centers, to quinones in the respiratory chain. The immediate electron acceptor for the enzyme in this species is believed to be ubiquinone. Couples the redox reaction to proton translocation (for every two electrons transferred, four hydrogen ions are translocated across the cytoplasmic membrane), and thus conserves the redox energy in a proton gradient. The protein is NADH-quinone oxidoreductase subunit D of Geotalea uraniireducens (strain Rf4) (Geobacter uraniireducens).